Consider the following 170-residue polypeptide: Vimentin A1 (170 aa).

A compositionally biased stretch (polar residues) spans 1 to 10 (DLTEAANKSN). The tract at residues 1–20 (DLTEAANKSNEALRLAKQES) is disordered. The interval 1-111 (DLTEAANKSN…ATYRKLLEGE (111 aa)) is coil 2. Residues 1–115 (DLTEAANKSN…KLLEGEESRI (115 aa)) enclose the IF rod domain. The segment at 112–170 (ESRISTPLPNFSSFNLRETMLELKPNIESTFTKKVLIKTIETRDGQVLNESTQNHDDLE) is tail.

Belongs to the intermediate filament family. In terms of assembly, homomer. Post-translationally, one of the most prominent phosphoproteins in various cells of mesenchymal origin. Phosphorylation is enhanced during cell division, at which time vimentin filaments are significantly reorganized. As to expression, expressed in low amounts in retina, optic nerve, and brain and in higher amounts in spinal cord.

In terms of biological role, vimentins are class-III intermediate filaments found in various non-epithelial cells, especially mesenchymal cells. Vimentin is attached to the nucleus, endoplasmic reticulum, and mitochondria, either laterally or terminally. The chain is Vimentin A1 from Carassius auratus (Goldfish).